Reading from the N-terminus, the 679-residue chain is Mitotic interactor and substrate of PLK1 (679 aa).

Position 78 is a phosphoserine; by CDK1; in vitro (serine 78). Disordered regions lie at residues 151-182 and 206-245; these read AVRK…TPLE and ANKG…GHVV. Over residues 153–163 the composition is skewed to polar residues; the sequence is RKSSTVATLQG. Phosphoserine is present on serine 156. Threonine 164 and threonine 172 each carry phosphothreonine; by CDK1; in vitro. Threonine 179 carries the phosphothreonine modification. Serine 214 bears the Phosphoserine; by CDK1; in vitro mark. Residue threonine 219 is modified to Phosphothreonine. At threonine 224 the chain carries Phosphothreonine; by CDK1; in vitro. A Phosphoserine; by CDK1; in vitro modification is found at serine 284. Threonine 287 bears the Phosphothreonine; by CDK1; in vitro mark. Serine 348 bears the Phosphoserine mark. Over residues 360 to 371 the composition is skewed to basic and acidic residues; it reads QREEDHRREGLH. The tract at residues 360–419 is disordered; sequence QREEDHRREGLHVGRASTPDWVSEGPQPGLRRALSSDSILSPAPDARAADPAPEVRKVNR. The residue at position 377 (threonine 377) is a Phosphothreonine; by CDK1; in vitro. Serine 382 carries the post-translational modification Phosphoserine; by CDK1; in vitro. Phosphoserine; by PLK1; in vitro occurs at positions 394, 395, and 397. Serine 400 is modified (phosphoserine). Positions 401–411 are enriched in low complexity; it reads PAPDARAADPA. Position 430 is a phosphoserine (serine 430). The tract at residues 447 to 494 is disordered; sequence PSSLSTAEAKAATSPKATMSPRHLSESSGKPLSTKQEASKPPRGCPQA. Serine 471 carries the phosphoserine; by PLK1; in vitro modification. The span at 472 to 482 shows a compositional bias: polar residues; it reads ESSGKPLSTKQ. Phosphoserine is present on residues serine 541 and serine 543. Residues 545-569 are a coiled coil; sequence DLLERERESVLRREQEVAEERRNAL. A compositionally biased stretch (basic and acidic residues) spans 557–567; sequence REQEVAEERRN. Disordered regions lie at residues 557-598 and 622-643; these read REQE…ITGS and DPVD…GINP. Serine 575 is subject to Phosphoserine; by CDK1; in vitro. Threonine 577 carries the phosphothreonine modification. Phosphoserine; by PLK1; in vitro occurs at positions 582 and 586. Residues 583–593 show a composition bias toward low complexity; the sequence is DQNSRSSSQAS. At serine 675 the chain carries Phosphoserine.

It belongs to the MISP family. In terms of assembly, associates with F-actin. Interacts with DCTN1; this interaction regulates DCTN1 distribution at the cell cortex. Interacts with PTK2/FAK and MAPRE1. In terms of processing, phosphorylated by CDK1 and PLK1. CDK1 is the priming kinase for PLK1 phosphorylation. Phosphorylation by PLK1 is required for proper spindle orientation at metaphase.

The protein localises to the cell junction. Its subcellular location is the focal adhesion. The protein resides in the cytoplasm. It localises to the cytoskeleton. It is found in the cell cortex. Functionally, plays a role in mitotic spindle orientation and mitotic progression. Regulates the distribution of dynactin at the cell cortex in a PLK1-dependent manner, thus stabilizing cortical and astral microtubule attachments required for proper mitotic spindle positioning. May link microtubules to the actin cytospkeleton and focal adhesions. May be required for directed cell migration and centrosome orientation. May also be necessary for proper stacking of the Golgi apparatus. This Homo sapiens (Human) protein is Mitotic interactor and substrate of PLK1.